Consider the following 518-residue polypeptide: Cytochrome P450 736A117 (518 aa).

A glycan (N-linked (GlcNAc...) asparagine) is linked at N12. A helical transmembrane segment spans residues 17 to 37; sequence FLQPLAFTLLAIFLVLLYTWY. 3 N-linked (GlcNAc...) asparagine glycosylation sites follow: N185, N275, and N356. A heme-binding site is contributed by C460.

This sequence belongs to the cytochrome P450 family. Requires heme as cofactor. As to expression, expressed at similar levels in fruit kernel, seedlings, leaves, stems and buds.

Its subcellular location is the membrane. In Prunus mume (Japanese apricot), this protein is Cytochrome P450 736A117.